A 256-amino-acid chain; its full sequence is Ciliary microtubule associated protein 1A (256 aa).

3 STPGR repeats span residues 66–92 (PGPGYLVPSNITVKGKDGTPAYSIYGR), 181–206 (PGPGTYRVIDPGSYKHRPPQYSMTAR), and 217–242 (PGPGAYSPEKVVMSRPQAPNFSFGIR).

It belongs to the CIMAP family.

The protein localises to the cytoplasm. Its subcellular location is the cytoskeleton. It is found in the flagellum axoneme. Functionally, outer dense fibers are filamentous structures located on the outside of the axoneme in the midpiece and principal piece of the mammalian sperm tail. May help to maintain the passive elastic structures and elastic recoil of the sperm tail. The protein is Ciliary microtubule associated protein 1A (cimap1a) of Xenopus tropicalis (Western clawed frog).